A 201-amino-acid polypeptide reads, in one-letter code: Recombination protein RecR (201 aa).

A C4-type zinc finger spans residues 58 to 73 (CGRCGALTDVDPCGIC). The region spanning 81–178 (ETLCLVSEWD…RVTRLAQGIP (98 aa)) is the Toprim domain.

It belongs to the RecR family.

Its function is as follows. May play a role in DNA repair. It seems to be involved in an RecBC-independent recombinational process of DNA repair. It may act with RecF and RecO. The sequence is that of Recombination protein RecR from Nitratidesulfovibrio vulgaris (strain DSM 19637 / Miyazaki F) (Desulfovibrio vulgaris).